The chain runs to 53 residues: Photoreceptor disk component PRCD (53 aa).

The S-palmitoyl cysteine moiety is linked to residue C2. The segment at 24-53 (PEPSRVDGTVVGSGSDTDLQSTGREKGPVK) is disordered. The segment covering 35-45 (GSGSDTDLQST) has biased composition (polar residues).

This sequence belongs to the PRCD family. Interacts with RHO/rhodopsin; the interaction promotes PRCD stability. Post-translationally, palmitoylated at Cys-2. Palmitoylation is essential for protein stability and trafficking to the photoreceptor outer segment, but does not appear to be essential for membrane localization. Probably palmitoylated by ZDHHC3. In terms of processing, phosphorylated. In terms of tissue distribution, expressed in retina, where it localizes to both rod and cone photoreceptors (at protein level).

Its subcellular location is the cell projection. It localises to the cilium. The protein localises to the photoreceptor outer segment. The protein resides in the membrane. It is found in the endoplasmic reticulum. Its subcellular location is the golgi apparatus. Its function is as follows. Involved in vision. The protein is Photoreceptor disk component PRCD of Mus musculus (Mouse).